The sequence spans 435 residues: 3-phosphoshikimate 1-carboxyvinyltransferase (435 aa).

3 residues coordinate 3-phosphoshikimate: lysine 25, serine 26, and arginine 30. Lysine 25 serves as a coordination point for phosphoenolpyruvate. Glycine 99 and arginine 130 together coordinate phosphoenolpyruvate. 3-phosphoshikimate-binding residues include serine 176, serine 177, glutamine 178, serine 204, aspartate 319, asparagine 342, and lysine 346. Residue glutamine 178 coordinates phosphoenolpyruvate. Aspartate 319 (proton acceptor) is an active-site residue. Arginine 350, arginine 394, and lysine 419 together coordinate phosphoenolpyruvate.

The protein belongs to the EPSP synthase family. In terms of assembly, monomer.

Its subcellular location is the cytoplasm. The catalysed reaction is 3-phosphoshikimate + phosphoenolpyruvate = 5-O-(1-carboxyvinyl)-3-phosphoshikimate + phosphate. The protein operates within metabolic intermediate biosynthesis; chorismate biosynthesis; chorismate from D-erythrose 4-phosphate and phosphoenolpyruvate: step 6/7. Catalyzes the transfer of the enolpyruvyl moiety of phosphoenolpyruvate (PEP) to the 5-hydroxyl of shikimate-3-phosphate (S3P) to produce enolpyruvyl shikimate-3-phosphate and inorganic phosphate. The sequence is that of 3-phosphoshikimate 1-carboxyvinyltransferase from Haemophilus ducreyi (strain 35000HP / ATCC 700724).